The chain runs to 211 residues: Small ribosomal subunit protein eS1 (211 aa).

The protein belongs to the eukaryotic ribosomal protein eS1 family.

The sequence is that of Small ribosomal subunit protein eS1 from Archaeoglobus fulgidus (strain ATCC 49558 / DSM 4304 / JCM 9628 / NBRC 100126 / VC-16).